The chain runs to 381 residues: Ceramide-binding protein svf-1 (381 aa).

The tract at residues 1-18 (MFKWAQAALANVAGTKEP) is peripherally associates with membranes.

It belongs to the SVF1 family.

It is found in the golgi apparatus. The protein resides in the cis-Golgi network membrane. Its subcellular location is the endoplasmic reticulum membrane. The protein localises to the cytoplasm. It localises to the nucleus. Its function is as follows. Ceramide-binding protein that may transfer ceramides from the endoplasmic reticulum membrane to the cis-Golgi network membrane, and is thereby required for the biosynthesis of complex sphingolipids. This is Ceramide-binding protein svf-1 (svf-1) from Neurospora crassa (strain ATCC 24698 / 74-OR23-1A / CBS 708.71 / DSM 1257 / FGSC 987).